A 143-amino-acid polypeptide reads, in one-letter code: Endoribonuclease YbeY (143 aa).

Positions 109, 113, and 119 each coordinate Zn(2+).

This sequence belongs to the endoribonuclease YbeY family. Zn(2+) serves as cofactor.

Its subcellular location is the cytoplasm. Functionally, single strand-specific metallo-endoribonuclease involved in late-stage 70S ribosome quality control and in maturation of the 3' terminus of the 16S rRNA. This Carboxydothermus hydrogenoformans (strain ATCC BAA-161 / DSM 6008 / Z-2901) protein is Endoribonuclease YbeY.